A 373-amino-acid chain; its full sequence is Enoyl-[acyl-carrier-protein] reductase, mitochondrial (373 aa).

A mitochondrion-targeting transit peptide spans 1-53 (MWVCGALCRTRAPAQLGQRLLPESRRRRPASASFSASAEPSRVRALVYGHHGD). Lysine 61 is modified (N6-acetyllysine; alternate). Lysine 61 bears the N6-succinyllysine; alternate mark. Catalysis depends on tyrosine 94, which acts as the Proton donor. NADP(+) is bound by residues asparagine 167, 193 to 196 (NSGV), and 216 to 218 (RDT). An N6-acetyllysine; alternate mark is found at lysine 252 and lysine 267. Residues lysine 252 and lysine 267 each carry the N6-succinyllysine; alternate modification. Residues 285-288 (YGGM) and 310-312 (FWL) contribute to the NADP(+) site. An N6-succinyllysine modification is found at lysine 316. Lysine 368 contacts NADP(+).

The protein belongs to the zinc-containing alcohol dehydrogenase family. Quinone oxidoreductase subfamily. Homodimer.

The protein localises to the mitochondrion. It carries out the reaction a 2,3-saturated acyl-[ACP] + NADP(+) = a (2E)-enoyl-[ACP] + NADPH + H(+). The enzyme catalyses (2E)-butenoyl-[ACP] + NADPH + H(+) = butanoyl-[ACP] + NADP(+). It catalyses the reaction (2E)-hexenoyl-[ACP] + NADPH + H(+) = hexanoyl-[ACP] + NADP(+). The catalysed reaction is (2E)-octenoyl-[ACP] + NADPH + H(+) = octanoyl-[ACP] + NADP(+). It carries out the reaction (2E)-decenoyl-[ACP] + NADPH + H(+) = decanoyl-[ACP] + NADP(+). The enzyme catalyses (2E)-dodecenoyl-[ACP] + NADPH + H(+) = dodecanoyl-[ACP] + NADP(+). It catalyses the reaction (2E)-tetradecenoyl-[ACP] + NADPH + H(+) = tetradecanoyl-[ACP] + NADP(+). The catalysed reaction is (2E)-hexadecenoyl-[ACP] + NADPH + H(+) = hexadecanoyl-[ACP] + NADP(+). Catalyzes the NADPH-dependent reduction of trans-2-enoyl thioesters in mitochondrial fatty acid synthesis (fatty acid synthesis type II). Fatty acid chain elongation in mitochondria uses acyl carrier protein (ACP) as an acyl group carrier, but the enzyme accepts both ACP and CoA thioesters as substrates in vitro. Displays a preference for medium-chain over short- and long-chain substrates. May provide the octanoyl chain used for lipoic acid biosynthesis, regulating protein lipoylation and mitochondrial respiratory activity particularly in Purkinje cells. Involved in iron homeostasis; affecting Fe-S cluster assembly and ceramide metabolism. Required for proper morphology and bioenergetic functions of mitochondria. Required for maintenance of neurons. The chain is Enoyl-[acyl-carrier-protein] reductase, mitochondrial (MECR) from Bos taurus (Bovine).